A 398-amino-acid chain; its full sequence is Ornithine aminotransferase (398 aa).

Lys-256 carries the N6-(pyridoxal phosphate)lysine modification.

It belongs to the class-III pyridoxal-phosphate-dependent aminotransferase family. OAT subfamily. Pyridoxal 5'-phosphate serves as cofactor.

It localises to the cytoplasm. The enzyme catalyses a 2-oxocarboxylate + L-ornithine = L-glutamate 5-semialdehyde + an L-alpha-amino acid. Its pathway is amino-acid biosynthesis; L-proline biosynthesis; L-glutamate 5-semialdehyde from L-ornithine: step 1/1. In terms of biological role, catalyzes the interconversion of ornithine to glutamate semialdehyde. The polypeptide is Ornithine aminotransferase (Halalkalibacterium halodurans (strain ATCC BAA-125 / DSM 18197 / FERM 7344 / JCM 9153 / C-125) (Bacillus halodurans)).